Here is a 259-residue protein sequence, read N- to C-terminus: Small ribosomal subunit protein uS7m (259 aa).

Residues 1-39 (MLRLIKQPLFRCASSGHLMKESLVFIHQTRTFQVGKFTS) constitute a mitochondrion transit peptide. Residue T157 is modified to Phosphothreonine.

Belongs to the universal ribosomal protein uS7 family. Component of the mitochondrial small ribosomal subunit (mt-SSU). Mature yeast 74S mitochondrial ribosomes consist of a small (37S) and a large (54S) subunit. The 37S small subunit contains a 15S ribosomal RNA (15S mt-rRNA) and at least 32 different proteins. The 54S large subunit contains a 21S rRNA (21S mt-rRNA) and at least 45 different proteins.

It localises to the mitochondrion. Its function is as follows. Component of the mitochondrial ribosome (mitoribosome), a dedicated translation machinery responsible for the synthesis of mitochondrial genome-encoded proteins, including at least some of the essential transmembrane subunits of the mitochondrial respiratory chain. The mitoribosomes are attached to the mitochondrial inner membrane and translation products are cotranslationally integrated into the membrane. This is Small ribosomal subunit protein uS7m (rsm7) from Schizosaccharomyces pombe (strain 972 / ATCC 24843) (Fission yeast).